A 182-amino-acid polypeptide reads, in one-letter code: GTP cyclohydrolase 1 (182 aa).

Positions 73, 76, and 144 each coordinate Zn(2+).

Belongs to the GTP cyclohydrolase I family. In terms of assembly, homomer.

It carries out the reaction GTP + H2O = 7,8-dihydroneopterin 3'-triphosphate + formate + H(+). Its pathway is cofactor biosynthesis; 7,8-dihydroneopterin triphosphate biosynthesis; 7,8-dihydroneopterin triphosphate from GTP: step 1/1. This is GTP cyclohydrolase 1 from Hydrogenobaculum sp. (strain Y04AAS1).